The primary structure comprises 247 residues: Aspartate/glutamate leucyltransferase (247 aa).

Belongs to the R-transferase family. Bpt subfamily.

Its subcellular location is the cytoplasm. The enzyme catalyses N-terminal L-glutamyl-[protein] + L-leucyl-tRNA(Leu) = N-terminal L-leucyl-L-glutamyl-[protein] + tRNA(Leu) + H(+). It carries out the reaction N-terminal L-aspartyl-[protein] + L-leucyl-tRNA(Leu) = N-terminal L-leucyl-L-aspartyl-[protein] + tRNA(Leu) + H(+). In terms of biological role, functions in the N-end rule pathway of protein degradation where it conjugates Leu from its aminoacyl-tRNA to the N-termini of proteins containing an N-terminal aspartate or glutamate. In Chromohalobacter salexigens (strain ATCC BAA-138 / DSM 3043 / CIP 106854 / NCIMB 13768 / 1H11), this protein is Aspartate/glutamate leucyltransferase.